Here is a 943-residue protein sequence, read N- to C-terminus: Receptor-like protein 35 (943 aa).

The N-terminal stretch at methionine 1–alanine 31 is a signal peptide. Topologically, residues alanine 32 to tryptophan 897 are extracellular. Residues asparagine 67, asparagine 82, asparagine 118, asparagine 147, asparagine 171, asparagine 195, asparagine 219, and asparagine 222 are each glycosylated (N-linked (GlcNAc...) asparagine). LRR repeat units lie at residues leucine 124 to leucine 148, histidine 150 to asparagine 171, leucine 172 to leucine 196, histidine 198 to leucine 220, asparagine 222 to leucine 244, alanine 245 to asparagine 267, leucine 268 to leucine 292, threonine 293 to serine 317, leucine 319 to isoleucine 340, proline 341 to serine 364, and serine 366 to phenylalanine 389. Asparagine 291 and asparagine 312 each carry an N-linked (GlcNAc...) asparagine glycan. Asparagine 354 and asparagine 361 each carry an N-linked (GlcNAc...) asparagine glycan. The stretch at valine 390–histidine 414 is one LRR 12; degenerate repeat. N-linked (GlcNAc...) asparagine glycosylation occurs at asparagine 391. LRR repeat units lie at residues leucine 415 to tyrosine 439, phenylalanine 440 to serine 463, serine 467 to glutamine 490, histidine 491 to leucine 514, proline 515 to histidine 537, lysine 544 to leucine 568, arginine 569 to leucine 592, lysine 593 to serine 617, arginine 619 to phenylalanine 639, serine 640 to lysine 665, glutamine 667 to phenylalanine 685, proline 686 to lysine 709, leucine 753 to leucine 777, lysine 778 to leucine 801, threonine 802 to leucine 825, and phenylalanine 827 to arginine 850. An N-linked (GlcNAc...) asparagine glycan is attached at asparagine 457. Asparagine 521, asparagine 524, asparagine 556, asparagine 582, and asparagine 605 each carry an N-linked (GlcNAc...) asparagine glycan. Residue asparagine 653 is glycosylated (N-linked (GlcNAc...) asparagine). The N-linked (GlcNAc...) asparagine glycan is linked to asparagine 699. Asparagine 784 and asparagine 800 each carry an N-linked (GlcNAc...) asparagine glycan. 3 N-linked (GlcNAc...) asparagine glycosylation sites follow: asparagine 832, asparagine 852, and asparagine 882. The chain crosses the membrane as a helical span at residues isoleucine 898 to leucine 918. Topologically, residues valine 919 to histidine 943 are cytoplasmic.

The protein belongs to the RLP family.

The protein localises to the cell membrane. This Arabidopsis thaliana (Mouse-ear cress) protein is Receptor-like protein 35.